The sequence spans 119 residues: Large ribosomal subunit protein uL18 (119 aa).

Belongs to the universal ribosomal protein uL18 family. In terms of assembly, part of the 50S ribosomal subunit; part of the 5S rRNA/L5/L18/L25 subcomplex. Contacts the 5S and 23S rRNAs.

This is one of the proteins that bind and probably mediate the attachment of the 5S RNA into the large ribosomal subunit, where it forms part of the central protuberance. The protein is Large ribosomal subunit protein uL18 of Ruegeria sp. (strain TM1040) (Silicibacter sp.).